Here is a 432-residue protein sequence, read N- to C-terminus: Putative D-alanyl-D-alanine carboxypeptidase (432 aa).

The helical; Signal-anchor transmembrane segment at 7 to 25 threads the bilayer; the sequence is ATVLLTFSLSAFAVEYPVL.

This sequence belongs to the peptidase S12 family. YfeW subfamily.

The protein resides in the cell inner membrane. The catalysed reaction is Preferential cleavage: (Ac)2-L-Lys-D-Ala-|-D-Ala. Also transpeptidation of peptidyl-alanyl moieties that are N-acyl substituents of D-alanine.. The chain is Putative D-alanyl-D-alanine carboxypeptidase from Salmonella agona (strain SL483).